A 283-amino-acid polypeptide reads, in one-letter code: 4-hydroxybenzoate octaprenyltransferase (283 aa).

The next 9 helical transmembrane spans lie at 16–36 (PIGT…AGAG), 40–60 (LRIV…GCVI), 85–105 (ISAT…FGLV), 108–128 (LNTE…LYPF), 135–155 (LPQI…FTAL), 160–180 (WFIA…YDTE), 204–224 (FDRL…GWIL), 226–246 (LITV…LFAY), and 263–283 (FLHN…HYWF).

This sequence belongs to the UbiA prenyltransferase family. It depends on Mg(2+) as a cofactor.

Its subcellular location is the cell inner membrane. It carries out the reaction all-trans-octaprenyl diphosphate + 4-hydroxybenzoate = 4-hydroxy-3-(all-trans-octaprenyl)benzoate + diphosphate. It functions in the pathway cofactor biosynthesis; ubiquinone biosynthesis. Functionally, catalyzes the prenylation of para-hydroxybenzoate (PHB) with an all-trans polyprenyl group. Mediates the second step in the final reaction sequence of ubiquinone-8 (UQ-8) biosynthesis, which is the condensation of the polyisoprenoid side chain with PHB, generating the first membrane-bound Q intermediate 3-octaprenyl-4-hydroxybenzoate. This Idiomarina loihiensis (strain ATCC BAA-735 / DSM 15497 / L2-TR) protein is 4-hydroxybenzoate octaprenyltransferase.